A 262-amino-acid chain; its full sequence is Ribosomal RNA small subunit methyltransferase A (262 aa).

Positions 13, 15, 40, 61, 85, and 103 each coordinate S-adenosyl-L-methionine.

It belongs to the class I-like SAM-binding methyltransferase superfamily. rRNA adenine N(6)-methyltransferase family. RsmA subfamily.

The protein localises to the cytoplasm. The catalysed reaction is adenosine(1518)/adenosine(1519) in 16S rRNA + 4 S-adenosyl-L-methionine = N(6)-dimethyladenosine(1518)/N(6)-dimethyladenosine(1519) in 16S rRNA + 4 S-adenosyl-L-homocysteine + 4 H(+). Its function is as follows. Specifically dimethylates two adjacent adenosines (A1518 and A1519) in the loop of a conserved hairpin near the 3'-end of 16S rRNA in the 30S particle. May play a critical role in biogenesis of 30S subunits. The protein is Ribosomal RNA small subunit methyltransferase A of Bordetella avium (strain 197N).